A 443-amino-acid chain; its full sequence is Endothelin receptor type B (443 aa).

Positions M1 to S26 are cleaved as a signal peptide. Residues E27–K102 lie on the Extracellular side of the membrane. The tract at residues T53–P89 is disordered. Residues S59–P69 are compositionally biased toward polar residues. N60 is a glycosylation site (N-linked (GlcNAc...) asparagine). A helical transmembrane segment spans residues Y103–I127. Over Y128–N138 the chain is Cytoplasmic. The helical transmembrane segment at I139–L164 threads the bilayer. The Extracellular portion of the chain corresponds to A165–K176. C175 and C256 are joined by a disulfide. A helical transmembrane segment spans residues L177 to I198. The Cytoplasmic segment spans residues D199 to T219. The helical transmembrane segment at A220–I244 threads the bilayer. Residues T245–T272 lie on the Extracellular side of the membrane. Residues A273–M297 traverse the membrane as a helical segment. The Cytoplasmic portion of the chain corresponds to T298–T325. A Phosphoserine modification is found at S306. The helical transmembrane segment at V326–Y351 threads the bilayer. The Extracellular segment spans residues D352–S363. N354 carries an N-linked (GlcNAc...) asparagine glycan. Residues F364–V390 form a helical membrane-spanning segment. The Cytoplasmic portion of the chain corresponds to S391–S443. 3 S-palmitoyl cysteine lipidation sites follow: C403, C404, and C406. S420 carries the post-translational modification Phosphoserine. Phosphotyrosine is present on Y440. S441, S442, and S443 each carry phosphoserine.

It belongs to the G-protein coupled receptor 1 family. Endothelin receptor subfamily. EDNRB sub-subfamily.

The protein localises to the cell membrane. Non-specific receptor for endothelin 1, 2, and 3. Mediates its action by association with G proteins that activate a phosphatidylinositol-calcium second messenger system. This is Endothelin receptor type B (EDNRB) from Sus scrofa (Pig).